The primary structure comprises 766 residues: Lanosterol synthase ERG7 (766 aa).

Residues Met-1 to Thr-47 form a disordered region. The PFTB 1 repeat unit spans residues Ala-148–Gly-190. The Proton donor role is filled by Asp-482. 2 PFTB repeats span residues Ile-586–Gly-626 and Ser-635–Thr-676.

It belongs to the terpene cyclase/mutase family.

Its subcellular location is the lipid droplet. It localises to the endoplasmic reticulum membrane. It catalyses the reaction (S)-2,3-epoxysqualene = lanosterol. It functions in the pathway terpene metabolism; lanosterol biosynthesis; lanosterol from farnesyl diphosphate: step 3/3. It participates in steroid metabolism; ergosterol biosynthesis. Its function is as follows. Lanosterol synthase; part of the third module of ergosterol biosynthesis pathway that includes the late steps of the pathway. ERG7 catalyzes the cyclization of (S)-2,3 oxidosqualene to lanosterol, a reaction that forms the sterol core. The third module or late pathway involves the ergosterol synthesis itself through consecutive reactions that mainly occur in the endoplasmic reticulum (ER) membrane. Firstly, the squalene synthase ERG9 catalyzes the condensation of 2 farnesyl pyrophosphate moieties to form squalene, which is the precursor of all steroids. Squalene synthase is crucial for balancing the incorporation of farnesyl diphosphate (FPP) into sterol and nonsterol isoprene synthesis. Secondly, squalene is converted into lanosterol by the consecutive action of the squalene epoxidase ERG1 and the lanosterol synthase ERG7. Then, the delta(24)-sterol C-methyltransferase ERG6 methylates lanosterol at C-24 to produce eburicol. Eburicol is the substrate of the sterol 14-alpha demethylase encoded by CYP51A, CYP51B and CYP51C, to yield 4,4,24-trimethyl ergosta-8,14,24(28)-trienol. CYP51B encodes the enzyme primarily responsible for sterol 14-alpha-demethylation, and plays an essential role in ascospore formation. CYP51A encodes an additional sterol 14-alpha-demethylase, induced on ergosterol depletion and responsible for the intrinsic variation in azole sensitivity. The third CYP51 isoform, CYP51C, does not encode a sterol 14-alpha-demethylase, but is required for full virulence on host wheat ears. The C-14 reductase ERG24 then reduces the C14=C15 double bond which leads to 4,4-dimethylfecosterol. A sequence of further demethylations at C-4, involving the C-4 demethylation complex containing the C-4 methylsterol oxidases ERG25, the sterol-4-alpha-carboxylate 3-dehydrogenase ERG26 and the 3-keto-steroid reductase ERG27, leads to the production of fecosterol via 4-methylfecosterol. ERG28 has a role as a scaffold to help anchor ERG25, ERG26 and ERG27 to the endoplasmic reticulum. The C-8 sterol isomerase ERG2 then catalyzes the reaction which results in unsaturation at C-7 in the B ring of sterols and thus converts fecosterol to episterol. The sterol-C5-desaturases ERG3A and ERG3BB then catalyze the introduction of a C-5 double bond in the B ring to produce 5-dehydroepisterol. The C-22 sterol desaturases ERG5A and ERG5B further convert 5-dehydroepisterol into ergosta-5,7,22,24(28)-tetraen-3beta-ol by forming the C-22(23) double bond in the sterol side chain. Finally, ergosta-5,7,22,24(28)-tetraen-3beta-ol is substrate of the C-24(28) sterol reductase ERG4 to produce ergosterol. This is Lanosterol synthase ERG7 from Gibberella zeae (strain ATCC MYA-4620 / CBS 123657 / FGSC 9075 / NRRL 31084 / PH-1) (Wheat head blight fungus).